Consider the following 203-residue polypeptide: MPDYKVYYFNVKALGEPLRFLLSYGNLPFDDVRITREEWPALKPTMPMGQMPVLEVDGKKVHQSVAMSRYLANQVGLAGADDWENLMIDTVVDTVNDFRLKIAIVAYEPDDMVKEKKMVTLNNEVIPFYLTKLNVIAKENNGHLVLGKPTWADVYFAGILDYLNYLTKTNLLENFPNLQEVVQKVLDNENVKAYIAKRPITEV.

Residues 2–79 (PDYKVYYFNV…YLANQVGLAG (78 aa)) form the GST N-terminal domain. Glutathione is bound by residues Tyr-8, Trp-39, Lys-43, 49–51 (GQM), and 63–64 (QS). One can recognise a GST C-terminal domain in the interval 81–203 (DDWENLMIDT…YIAKRPITEV (123 aa)).

It belongs to the GST superfamily. Sigma family. Homodimer.

The enzyme catalyses RX + glutathione = an S-substituted glutathione + a halide anion + H(+). Functionally, conjugation of reduced glutathione to a wide number of exogenous and endogenous hydrophobic electrophiles. This is Glutathione S-transferase (GstS1) from Anopheles gambiae (African malaria mosquito).